Here is a 132-residue protein sequence, read N- to C-terminus: Small ribosomal subunit protein uS8 (132 aa).

This sequence belongs to the universal ribosomal protein uS8 family. As to quaternary structure, part of the 30S ribosomal subunit. Contacts proteins S5 and S12.

One of the primary rRNA binding proteins, it binds directly to 16S rRNA central domain where it helps coordinate assembly of the platform of the 30S subunit. The polypeptide is Small ribosomal subunit protein uS8 (Streptococcus suis (strain 98HAH33)).